The following is a 924-amino-acid chain: Type II inositol 3,4-bisphosphate 4-phosphatase (924 aa).

Residues M1–Q13 are compositionally biased toward basic and acidic residues. Disordered stretches follow at residues M1 to G25, I481 to Y516, and D546 to P569. Residues D23–L165 enclose the C2 domain.

It belongs to the inositol 3,4-bisphosphate 4-phosphatase family.

The catalysed reaction is a 1,2-diacyl-sn-glycero-3-phospho-(1D-myo-inositol-3,4-bisphosphate) + H2O = a 1,2-diacyl-sn-glycero-3-phospho-(1D-myo-inositol-3-phosphate) + phosphate. It catalyses the reaction 1D-myo-inositol 1,3,4-trisphosphate + H2O = 1D-myo-inositol 1,3-bisphosphate + phosphate. The enzyme catalyses 1D-myo-inositol 3,4-bisphosphate + H2O = 1D-myo-inositol 3-phosphate + phosphate. It participates in signal transduction; phosphatidylinositol signaling pathway. Strongly inhibited by inositol hexakisphosphate. In terms of biological role, catalyzes the hydrolysis of the 4-position phosphate of phosphatidylinositol 3,4-bisphosphate, inositol 1,3,4-trisphosphate and inositol 3,4-bisphosphate. Plays a role in the late stages of macropinocytosis by dephosphorylating phosphatidylinositol 3,4-bisphosphate in membrane ruffles. Antagonizes the PI3K-AKT/PKB signaling pathway by dephosphorylating phosphoinositides and thereby modulating cell cycle progression and cell survival. The sequence is that of Type II inositol 3,4-bisphosphate 4-phosphatase (INPP4B) from Pongo abelii (Sumatran orangutan).